Here is a 142-residue protein sequence, read N- to C-terminus: Large ribosomal subunit protein uL11 (142 aa).

The protein belongs to the universal ribosomal protein uL11 family. In terms of assembly, part of the ribosomal stalk of the 50S ribosomal subunit. Interacts with L10 and the large rRNA to form the base of the stalk. L10 forms an elongated spine to which L12 dimers bind in a sequential fashion forming a multimeric L10(L12)X complex. In terms of processing, one or more lysine residues are methylated.

In terms of biological role, forms part of the ribosomal stalk which helps the ribosome interact with GTP-bound translation factors. This is Large ribosomal subunit protein uL11 from Serratia proteamaculans (strain 568).